The sequence spans 582 residues: Glutaredoxin domain-containing cysteine-rich protein CG12206 (582 aa).

A compositionally biased stretch (polar residues) spans 217-227 (CETLDSGTGSD). Disordered regions lie at residues 217-244 (CETL…VRSP) and 260-300 (EADH…SCDS). Positions 291–300 (SSNSSLSCDS) are enriched in low complexity. Residues 423 to 528 (NVKNYMEKDV…QLLRPYKSIA (106 aa)) enclose the Glutaredoxin domain.

It belongs to the GRXCR1 family.

This chain is Glutaredoxin domain-containing cysteine-rich protein CG12206, found in Drosophila melanogaster (Fruit fly).